The primary structure comprises 444 residues: MSQSYINVIGAGLAGSEAAYQIAKRGIPVKLYEMRGVKSTPQHKTDNFAELVCSNSFRGDSLTNAVGLLKEEMRRLDSIIMRNGEAHRVPAGGAMAVDREGYSEAVTEEIHKHPLIEVIRDEITDIPGDAITVIATGPLTSDSLAAKIHELNGGDGFYFYDAAAPIVDKNTIDMNKVYLKSRYDKGEAAYLNCPMTKEEFMAFHEALTTAEEAPLNSFEKEKYFEGCMPIEVMAKRGIKTMLYGPMKPVGLEYPEDYKGPRDGEFKTPYAVVQLRQDNAAGSLYNIVGFQTHLKWGEQKRVFQMIPGLENAEFVRYGVMHRNSYMDSPNLLDQTFATRKNPNLFFAGQMTGVEGYVESAASGLVAGINAARRFNGESEVVFPQTTAIGALPHYITHTDSKHFQPMNVNFGIIKELEGPRIRDKKERYEAIATRALKDLEKFLNY.

Residue 10–15 (GAGLAG) coordinates FAD.

The protein belongs to the MnmG family. TrmFO subfamily. FAD serves as cofactor.

Its subcellular location is the cytoplasm. It carries out the reaction uridine(54) in tRNA + (6R)-5,10-methylene-5,6,7,8-tetrahydrofolate + NADH + H(+) = 5-methyluridine(54) in tRNA + (6S)-5,6,7,8-tetrahydrofolate + NAD(+). It catalyses the reaction uridine(54) in tRNA + (6R)-5,10-methylene-5,6,7,8-tetrahydrofolate + NADPH + H(+) = 5-methyluridine(54) in tRNA + (6S)-5,6,7,8-tetrahydrofolate + NADP(+). Catalyzes the folate-dependent formation of 5-methyl-uridine at position 54 (M-5-U54) in all tRNAs. The protein is Methylenetetrahydrofolate--tRNA-(uracil-5-)-methyltransferase TrmFO of Streptococcus agalactiae serotype III (strain NEM316).